A 103-amino-acid chain; its full sequence is Small ribosomal subunit protein uS10 (103 aa).

The protein belongs to the universal ribosomal protein uS10 family. In terms of assembly, part of the 30S ribosomal subunit.

Its function is as follows. Involved in the binding of tRNA to the ribosomes. This chain is Small ribosomal subunit protein uS10, found in Helicobacter hepaticus (strain ATCC 51449 / 3B1).